A 349-amino-acid chain; its full sequence is Hyaluronidase Tab y 2.0101 (349 aa).

Positions 1–25 (MKLHQGLVCLSVLILLPTCILGDRK) are cleaved as a signal peptide. 2 disulfides stabilise this stretch: Cys-37–Cys-328 and Cys-205–Cys-216. Asn-41, Asn-81, Asn-99, and Asn-119 each carry an N-linked (GlcNAc...) asparagine glycan. Glu-129 (proton donor) is an active-site residue. The N-linked (GlcNAc...) asparagine glycan is linked to Asn-147. Residues Asn-251 and Asn-297 are each glycosylated (N-linked (GlcNAc...) asparagine).

It belongs to the glycosyl hydrolase 56 family. Expressed in salivary glands.

The protein resides in the secreted. The enzyme catalyses Random hydrolysis of (1-&gt;4)-linkages between N-acetyl-beta-D-glucosamine and D-glucuronate residues in hyaluronate.. Functionally, hydrolyzes high molecular weight hyaluronic acid to produce small oligosaccharides. The chain is Hyaluronidase Tab y 2.0101 from Tabanus yao (Horsefly).